Reading from the N-terminus, the 393-residue chain is Ig heavy chain C region (393 aa).

Ig-like domains are found at residues 63–157 (PTVI…RNIT), 168–260 (PVIK…ASIH), and 270–370 (PSVS…RTVN). N-linked (GlcNAc...) asparagine glycans are attached at residues N119, N155, N200, N230, N329, N366, N370, and N380.

This chain is Ig heavy chain C region, found in Heterodontus francisci (Horn shark).